Consider the following 156-residue polypeptide: SsrA-binding protein (156 aa).

It belongs to the SmpB family.

It localises to the cytoplasm. Functionally, required for rescue of stalled ribosomes mediated by trans-translation. Binds to transfer-messenger RNA (tmRNA), required for stable association of tmRNA with ribosomes. tmRNA and SmpB together mimic tRNA shape, replacing the anticodon stem-loop with SmpB. tmRNA is encoded by the ssrA gene; the 2 termini fold to resemble tRNA(Ala) and it encodes a 'tag peptide', a short internal open reading frame. During trans-translation Ala-aminoacylated tmRNA acts like a tRNA, entering the A-site of stalled ribosomes, displacing the stalled mRNA. The ribosome then switches to translate the ORF on the tmRNA; the nascent peptide is terminated with the 'tag peptide' encoded by the tmRNA and targeted for degradation. The ribosome is freed to recommence translation, which seems to be the essential function of trans-translation. This is SsrA-binding protein from Staphylococcus epidermidis (strain ATCC 35984 / DSM 28319 / BCRC 17069 / CCUG 31568 / BM 3577 / RP62A).